The primary structure comprises 120 residues: Protein crumbs homolog 3 (120 aa).

The first 26 residues, 1–26 (MANPGLGLLLALGLPFLLARWGRAWG), serve as a signal peptide directing secretion. Residues 27–59 (QIQTTSANENSTVLPSSTSSSSDGNLRPEAITA) lie on the Extracellular side of the membrane. The N-linked (GlcNAc...) asparagine glycan is linked to Asn36. Residues 60–80 (IIVVFSLLAALLLAVGLALLV) traverse the membrane as a helical segment. The Cytoplasmic segment spans residues 81–120 (RKLREKRQTEGTYRPSSEEQVGARVPPTPNLKLPPEERLI). The interval 84 to 120 (REKRQTEGTYRPSSEEQVGARVPPTPNLKLPPEERLI) is interaction with EPB41L5. The interval 87–120 (RQTEGTYRPSSEEQVGARVPPTPNLKLPPEERLI) is disordered. A compositionally biased stretch (polar residues) spans 90–99 (EGTYRPSSEE). A PDZ-binding motif is present at residues 117–120 (ERLI).

Component of a complex composed of CRB3, PALS1 and PATJ. Interacts (via C-terminus) with PALS1 (via PDZ domain). Interacts with PARD6A. Interacts (via intracellular domain) with EPB41L5. Interacts with WDR83. In terms of tissue distribution, preferentially expressed in epithelial tissues. Expressed at high levels in lung, kidney, and colon. Expressed at high levels in retina, colon and mammary glands. Moderately expressed in liver, spleen, pancreas and prostate. Moderately to weakly expressed in the placenta. Weakly expressed in skeletal muscle and small intestine.

Its subcellular location is the apical cell membrane. The protein localises to the cell junction. The protein resides in the tight junction. In terms of biological role, involved in the establishment of cell polarity in mammalian epithelial cells. Regulates the morphogenesis of tight junctions. Involved in promoting phosphorylation and cytoplasmic retention of transcriptional coactivators YAP1 and WWTR1/TAZ which leads to suppression of TGFB1-dependent transcription of target genes such as CCN2/CTGF, SERPINE1/PAI1, SNAI1/SNAIL1 and SMAD7. The sequence is that of Protein crumbs homolog 3 from Homo sapiens (Human).